Consider the following 270-residue polypeptide: Putative phosphoenolpyruvate synthase regulatory protein (270 aa).

Gly-150–Thr-157 contacts ADP.

This sequence belongs to the pyruvate, phosphate/water dikinase regulatory protein family. PSRP subfamily.

It carries out the reaction [pyruvate, water dikinase] + ADP = [pyruvate, water dikinase]-phosphate + AMP + H(+). The enzyme catalyses [pyruvate, water dikinase]-phosphate + phosphate + H(+) = [pyruvate, water dikinase] + diphosphate. Functionally, bifunctional serine/threonine kinase and phosphorylase involved in the regulation of the phosphoenolpyruvate synthase (PEPS) by catalyzing its phosphorylation/dephosphorylation. In Shewanella oneidensis (strain ATCC 700550 / JCM 31522 / CIP 106686 / LMG 19005 / NCIMB 14063 / MR-1), this protein is Putative phosphoenolpyruvate synthase regulatory protein.